A 992-amino-acid polypeptide reads, in one-letter code: Ankyrin repeat domain-containing protein 18A (992 aa).

ANK repeat units lie at residues 67 to 96 (KDRT…QIDI), 100 to 129 (LNRT…NPNI), 133 to 162 (YGNT…NIEA), 166 to 195 (EGNT…NIHA), and 199 to 228 (FKRT…RISS). Positions 262–320 (NHLRNDNQETAAMKPANLKKRKERAKAEHNLKVASEEKQERLQRSENKQPQDSQSYGKK) are disordered. 4 coiled-coil regions span residues 278–310 (NLKK…ENKQ), 378–618 (KMIT…AERE), 683–713 (ISLL…CLEM), and 743–899 (FKKL…EAFA). The span at 286–310 (AKAEHNLKVASEEKQERLQRSENKQ) shows a compositional bias: basic and acidic residues.

This chain is Ankyrin repeat domain-containing protein 18A (ANKRD18A), found in Homo sapiens (Human).